The chain runs to 285 residues: tRNA pseudouridine synthase A (285 aa).

Asp64 acts as the Nucleophile in catalysis. Tyr125 contacts substrate.

Belongs to the tRNA pseudouridine synthase TruA family. Homodimer.

It carries out the reaction uridine(38/39/40) in tRNA = pseudouridine(38/39/40) in tRNA. In terms of biological role, formation of pseudouridine at positions 38, 39 and 40 in the anticodon stem and loop of transfer RNAs. The chain is tRNA pseudouridine synthase A from Streptomyces avermitilis (strain ATCC 31267 / DSM 46492 / JCM 5070 / NBRC 14893 / NCIMB 12804 / NRRL 8165 / MA-4680).